We begin with the raw amino-acid sequence, 399 residues long: Fe-coproporphyrin III synthase (399 aa).

The Radical SAM core domain maps to 36 to 253 (KDKKPVVVWN…TRKLHEKGFP (218 aa)). [4Fe-4S] cluster-binding residues include cysteine 50, cysteine 54, and cysteine 57.

This sequence belongs to the radical SAM superfamily. The cofactor is [4Fe-4S] cluster.

It catalyses the reaction 12,18-didecarboxysiroheme + 2 AH2 + 2 S-adenosyl-L-methionine = Fe-coproporphyrin III + 2 5'-deoxyadenosine + 2 L-methionine + 2 acetate + 2 A + 2 H(+). It functions in the pathway porphyrin-containing compound metabolism; protoheme biosynthesis. Functionally, involved in siroheme-dependent heme b biosynthesis. Catalyzes the conversion of didecarboxysiroheme into Fe-coproporphyrin III by oxidative loss of two acetic acid side chains. The protein is Fe-coproporphyrin III synthase of Methanosarcina barkeri (strain Fusaro / DSM 804).